Here is a 579-residue protein sequence, read N- to C-terminus: Pre-mRNA-processing protein 45 (579 aa).

Disordered regions lie at residues 1–64 (MTSV…GWRP), 218–254 (QQDPMEPPKFKHKKIPRGPPSPPPPIMHSPPRKLTAE), 343–414 (QKAR…TERR), and 521–579 (AAEA…VDDD). The segment covering 234-245 (RGPPSPPPPIMH) has biased composition (pro residues). The segment covering 343–359 (QKAREERAASNRRDSRA) has biased composition (basic and acidic residues). Over residues 366 to 379 (ASRSPSAYSRSATP) the composition is skewed to low complexity. 3 stretches are compositionally biased toward basic and acidic residues: residues 386-414 (ARERERIRRERRQDAERQLRQSRMGTERR), 521-538 (AAEAEARDGPVQFEKDTT), and 563-579 (EVEREDRGSKRARVDDD).

Belongs to the SNW family. As to quaternary structure, associated with the spliceosome.

The protein resides in the nucleus. Its function is as follows. Involved in pre-mRNA splicing. This Aspergillus fumigatus (strain ATCC MYA-4609 / CBS 101355 / FGSC A1100 / Af293) (Neosartorya fumigata) protein is Pre-mRNA-processing protein 45 (prp45).